The primary structure comprises 393 residues: NAD(P)H-quinone oxidoreductase subunit H, chloroplastic (393 aa).

This sequence belongs to the complex I 49 kDa subunit family. As to quaternary structure, NDH is composed of at least 16 different subunits, 5 of which are encoded in the nucleus.

The protein localises to the plastid. The protein resides in the chloroplast thylakoid membrane. It catalyses the reaction a plastoquinone + NADH + (n+1) H(+)(in) = a plastoquinol + NAD(+) + n H(+)(out). It carries out the reaction a plastoquinone + NADPH + (n+1) H(+)(in) = a plastoquinol + NADP(+) + n H(+)(out). NDH shuttles electrons from NAD(P)H:plastoquinone, via FMN and iron-sulfur (Fe-S) centers, to quinones in the photosynthetic chain and possibly in a chloroplast respiratory chain. The immediate electron acceptor for the enzyme in this species is believed to be plastoquinone. Couples the redox reaction to proton translocation, and thus conserves the redox energy in a proton gradient. This is NAD(P)H-quinone oxidoreductase subunit H, chloroplastic from Trifolium subterraneum (Subterranean clover).